The sequence spans 1132 residues: DNA-directed RNA polymerase subunit beta (1132 aa).

It belongs to the RNA polymerase beta chain family. The RNAP catalytic core consists of 2 alpha, 1 beta, 1 beta' and 1 omega subunit. When a sigma factor is associated with the core the holoenzyme is formed, which can initiate transcription.

The catalysed reaction is RNA(n) + a ribonucleoside 5'-triphosphate = RNA(n+1) + diphosphate. Functionally, DNA-dependent RNA polymerase catalyzes the transcription of DNA into RNA using the four ribonucleoside triphosphates as substrates. The sequence is that of DNA-directed RNA polymerase subunit beta from Carboxydothermus hydrogenoformans (strain ATCC BAA-161 / DSM 6008 / Z-2901).